A 343-amino-acid chain; its full sequence is Ribosomal RNA small subunit methyltransferase C (343 aa).

The protein belongs to the methyltransferase superfamily. RsmC family. As to quaternary structure, monomer.

The protein localises to the cytoplasm. It catalyses the reaction guanosine(1207) in 16S rRNA + S-adenosyl-L-methionine = N(2)-methylguanosine(1207) in 16S rRNA + S-adenosyl-L-homocysteine + H(+). Functionally, specifically methylates the guanine in position 1207 of 16S rRNA in the 30S particle. This Escherichia coli O6:H1 (strain CFT073 / ATCC 700928 / UPEC) protein is Ribosomal RNA small subunit methyltransferase C.